A 366-amino-acid polypeptide reads, in one-letter code: Alcohol dehydrogenase (366 aa).

Residues Cys41, His62, Glu63, and Asp167 each coordinate Zn(2+).

The protein belongs to the zinc-containing alcohol dehydrogenase family. As to quaternary structure, homotetramer. Requires Zn(2+) as cofactor.

It carries out the reaction a primary alcohol + NAD(+) = an aldehyde + NADH + H(+). The catalysed reaction is a secondary alcohol + NAD(+) = a ketone + NADH + H(+). It catalyses the reaction (R,R)-butane-2,3-diol + NAD(+) = (R)-acetoin + NADH + H(+). The enzyme catalyses an aldehyde + NAD(+) + H2O = a carboxylate + NADH + 2 H(+). Its function is as follows. Multifunctional alcohol dehydrogenase exhibiting NAD(+)-dependent dehydrogenase activities for 2,3-butanediol, ethanol and acetaldehyde, and reductase activities for acetoin (NADH-dependent), and diacetyl and acetaldehyde (independently of whether NADH or NADPH is the reductant). The rate of oxidation of 2,3-butanediol is much higher than for the oxidation of ethanol. Has acetaldehyde dehydrogenase activity leading to acetate formation. May function in the release of excess reducing power in the absence of exogenous hydrogen acceptors such as oxygen. The sequence is that of Alcohol dehydrogenase (adh) from Cupriavidus necator (strain ATCC 17699 / DSM 428 / KCTC 22496 / NCIMB 10442 / H16 / Stanier 337) (Ralstonia eutropha).